The primary structure comprises 438 residues: 3-phosphoshikimate 1-carboxyvinyltransferase (438 aa).

Lys-21 is a binding site for phosphoenolpyruvate. 3-phosphoshikimate contacts are provided by Ser-22 and Arg-26. The tract at residues 93–96 (NSGT) is phosphoenolpyruvate. Gly-95, Thr-96, and Arg-123 together coordinate phosphoenolpyruvate. 3-phosphoshikimate contacts are provided by Ser-167, Ala-168, Gln-169, Asp-315, and Lys-342. Phosphoenolpyruvate is bound at residue Gln-169. Asp-315 functions as the Proton acceptor in the catalytic mechanism. Residues Arg-346 and Arg-387 each coordinate phosphoenolpyruvate.

It belongs to the EPSP synthase family. As to quaternary structure, homodimer or homotetramer.

It localises to the cytoplasm. It carries out the reaction 3-phosphoshikimate + phosphoenolpyruvate = 5-O-(1-carboxyvinyl)-3-phosphoshikimate + phosphate. It functions in the pathway metabolic intermediate biosynthesis; chorismate biosynthesis; chorismate from D-erythrose 4-phosphate and phosphoenolpyruvate: step 6/7. Catalyzes the transfer of the enolpyruvyl moiety of phosphoenolpyruvate (PEP) to the 5-hydroxyl of shikimate-3-phosphate (S3P) to produce enolpyruvyl shikimate-3-phosphate and inorganic phosphate. This Coxiella burnetii (strain RSA 493 / Nine Mile phase I) protein is 3-phosphoshikimate 1-carboxyvinyltransferase.